Reading from the N-terminus, the 344-residue chain is MSIKYPKYPNITIIGAGSYGTAIAIALSRNGHSVLLWGHNAIHIQKLQINRCNQAYLPGIAFPPSLYLEKSLSIALSTCRNLLIAVPSRVFGHVLMRLKPNLKSNTRIIIASKGLEPKTGRLLQDVAYDILGKNIPIAIISGPTFARELAMGLPTAITLASNDTILSCDLQNILHCNKNFRIYSNTDTIGIQIAGVVKNIIAIGAGISDGIGFGSNARTALITRGLVEMSRLGIAIGATLDTFMGLAGLGDLILTCTDNQSRNRRFGILLGQGFEIHHAQKNVGKIIEGFYNIKEVYMLSVKHKVDMPITEQTYQILYQNKNVHDAAHSLLERTQKEEKINGLK.

Positions 18, 19, 39, and 113 each coordinate NADPH. Sn-glycerol 3-phosphate-binding residues include K113, G142, and T144. Position 146 (A146) interacts with NADPH. Residues K198, D251, S261, R262, and N263 each contribute to the sn-glycerol 3-phosphate site. Catalysis depends on K198, which acts as the Proton acceptor. R262 contacts NADPH. Positions 286 and 288 each coordinate NADPH.

This sequence belongs to the NAD-dependent glycerol-3-phosphate dehydrogenase family.

Its subcellular location is the cytoplasm. The catalysed reaction is sn-glycerol 3-phosphate + NAD(+) = dihydroxyacetone phosphate + NADH + H(+). It carries out the reaction sn-glycerol 3-phosphate + NADP(+) = dihydroxyacetone phosphate + NADPH + H(+). It functions in the pathway membrane lipid metabolism; glycerophospholipid metabolism. Functionally, catalyzes the reduction of the glycolytic intermediate dihydroxyacetone phosphate (DHAP) to sn-glycerol 3-phosphate (G3P), the key precursor for phospholipid synthesis. This Blochmanniella pennsylvanica (strain BPEN) protein is Glycerol-3-phosphate dehydrogenase [NAD(P)+].